The following is a 729-amino-acid chain: Neurochondrin (729 aa).

N-acetylserine is present on serine 2. Serine 2 is subject to Phosphoserine. An N-acetylalanine modification is found at serine 2. Residues cysteine 3 and cysteine 4 are each lipidated (S-palmitoyl cysteine). Arginine 75 is modified (asymmetric dimethylarginine). Position 448 is a phosphoserine (serine 448).

The protein belongs to the neurochondrin family. As to quaternary structure, interacts with MCHR1. Interacts with SEMA4C. Interacts with DIAPH1 (via FH3 domain). Interacts with GRM5. In terms of processing, palmitoylated. Palmitoylation by ZDHHC1, ZDHHC3 and ZDHHC11 regulates the association of NCDN with endosome membranes. May also be palmitoylated by ZDHHC7. As to expression, abundantly expressed in whole adult brain and in all individual brain regions examined, including spinal cord. Weakly expressed in ovary, testis, fetal brain and small intestine.

It localises to the cytoplasm. The protein localises to the cytosol. Its subcellular location is the endosome membrane. It is found in the cell projection. The protein resides in the dendrite. It localises to the postsynapse. Functionally, probably involved in signal transduction in the nervous system, via increasing cell surface localization of GRM5/mGluR5 and positively regulating its signaling. Required for the spatial learning process. Acts as a negative regulator of Ca(2+)-calmodulin-dependent protein kinase 2 (CaMK2) phosphorylation. May play a role in modulating melanin-concentrating hormone-mediated functions via its interaction with MCHR1 that interferes with G protein-coupled signal transduction. May be involved in bone metabolism. May also be involved in neurite outgrowth. This chain is Neurochondrin, found in Homo sapiens (Human).